The chain runs to 22 residues: Hemoglobinase-like protein 2 (22 aa).

The protein belongs to the peptidase C13 family.

It carries out the reaction Hydrolysis of proteins and small molecule substrates at -Asn-|-Xaa- bonds.. This is Hemoglobinase-like protein 2 from Fasciola hepatica (Liver fluke).